Consider the following 206-residue polypeptide: Probable NAD(+) phosphorylase Rv3189 (206 aa).

Belongs to the MbcT/ParT/Res family. In terms of assembly, forms a heterotetramer with cognate antitoxin Rv3188.

It carries out the reaction phosphate + NAD(+) = ADP-alpha-D-ribose 1''-phosphate + nicotinamide + H(+). In terms of biological role, probable toxic component of a type II toxin-antitoxin (TA) system. Degrades NAD(+) by phosphorolysis. Neutralized by its cognate antitoxin Rv3188. This Mycobacterium tuberculosis (strain ATCC 25618 / H37Rv) protein is Probable NAD(+) phosphorylase Rv3189.